Consider the following 201-residue polypeptide: MTDQGENEKKQRRSNATIAVACLSFFVCMIGAAYASVPLYRIFCQVTGYGGTTQRVEQYSDTILDKTIKVRFDANIANGLPWDFKPMQREVTVRIGETTMIKYEAHNLFGEETYGRASFNVAPGRAGAYFNKVECFCFTDNTLKPGEDLELPVVFFVDPEFVNDPDLKDVKTITLSYTFFPIDKPRPVVNAKAVGSTRNGG.

At 1–12 the chain is on the cytoplasmic side; the sequence is MTDQGENEKKQR. The chain crosses the membrane as a helical; Signal-anchor for type II membrane protein span at residues 13–35; it reads RSNATIAVACLSFFVCMIGAAYA. Residues 36–201 lie on the Periplasmic side of the membrane; the sequence is SVPLYRIFCQ…KAVGSTRNGG (166 aa).

The protein belongs to the COX11/CtaG family.

It is found in the cell inner membrane. Its function is as follows. Exerts its effect at some terminal stage of cytochrome c oxidase synthesis, probably by being involved in the insertion of the copper B into subunit I. This Brucella suis biovar 1 (strain 1330) protein is Cytochrome c oxidase assembly protein CtaG.